We begin with the raw amino-acid sequence, 215 residues long: uncharacterized protein (215 aa).

A run of 6 helical transmembrane segments spans residues 3-23 (LLAY…LRSI), 30-50 (ANLL…GLTW), 59-79 (LGLS…LRFW), 87-107 (WGTY…AICV), 122-142 (VSTC…SNIY), and 156-176 (VLFG…LIYV).

The protein belongs to the major facilitator superfamily. Allantoate permease family.

It localises to the membrane. This is an uncharacterized protein from Saccharomyces cerevisiae (strain ATCC 204508 / S288c) (Baker's yeast).